We begin with the raw amino-acid sequence, 157 residues long: Endoribonuclease YbeY (157 aa).

Positions 123, 127, and 133 each coordinate Zn(2+).

This sequence belongs to the endoribonuclease YbeY family. The cofactor is Zn(2+).

It localises to the cytoplasm. In terms of biological role, single strand-specific metallo-endoribonuclease involved in late-stage 70S ribosome quality control and in maturation of the 3' terminus of the 16S rRNA. The polypeptide is Endoribonuclease YbeY (Limosilactobacillus fermentum (strain NBRC 3956 / LMG 18251) (Lactobacillus fermentum)).